A 1330-amino-acid chain; its full sequence is Ubinuclein-2 (1330 aa).

The disordered stretch occupies residues 1-113; sequence MAEPRRVAFI…PPPRPPKETV (113 aa). Residue Ser-13 is modified to Phosphoserine. Composition is skewed to basic and acidic residues over residues 16 to 31 and 55 to 67; these read RRREADFAGAEREPPR and ARDKPLPQREVSR. Residues 81 to 96 show a composition bias toward pro residues; it reads PEPPPPPLPLQTPPPR. Thr-229 is modified (phosphothreonine). Ser-236 bears the Phosphoserine mark. Disordered regions lie at residues 236 to 304 and 322 to 345; these read SDTE…KKRY and DALKKESTPKVPVIPSTSSLPKPP. Thr-238 bears the Phosphothreonine mark. Residue Lys-258 forms a Glycyl lysine isopeptide (Lys-Gly) (interchain with G-Cter in SUMO2) linkage. A Phosphoserine modification is found at Ser-297. Phosphoserine occurs at positions 402, 405, 408, and 570. Disordered stretches follow at residues 559 to 583, 767 to 789, 801 to 835, 866 to 909, 964 to 991, 1021 to 1202, and 1292 to 1330; these read LQADEEREKNGSDDDDDEKPGKRVI, NKGPSVSSRLNVPTTKPRPGLRE, LATPKKLDSPQTAHSSSLIAGHTGPVPKKPQDLAH, GLQR…SLTQ, YRLPLSTPSPGNGSQGSHPLVSRTAPST, PKLA…SSVV, and PGTQHAATLPHSPLPTHLQQAFNDGGQSKGDTKLPRKPQ. Residues 560–570 are compositionally biased toward basic and acidic residues; that stretch reads QADEEREKNGS. Polar residues-rich tracts occupy residues 767–780 and 809–818; these read NKGPSVSSRLNVPT and SPQTAHSSSL. The segment covering 866–895 has biased composition (low complexity); sequence GLQRSSQIHASSSQTHVSSSQAQAAASSHA. Composition is skewed to polar residues over residues 899 to 909 and 969 to 980; these read SEAQDASSLTQ and STPSPGNGSQGS. Positions 1030–1044 are enriched in pro residues; the sequence is ATSPKPLTSPKPSVS. The span at 1045–1056 shows a compositional bias: low complexity; the sequence is PKPSLSAKPSVS. Lys-1052 bears the N6-acetyllysine mark. Composition is skewed to polar residues over residues 1073–1148, 1158–1169, and 1308–1317; these read PSSS…NSLS, RGSNLNSSGANR, and HLQQAFNDGG. Ser-1107 is modified (phosphoserine). Residue Lys-1132 is modified to N6-acetyllysine. Over residues 1321–1330 the composition is skewed to basic and acidic residues; that stretch reads GDTKLPRKPQ.

The protein belongs to the ubinuclein family.

The sequence is that of Ubinuclein-2 (Ubn2) from Rattus norvegicus (Rat).